Reading from the N-terminus, the 351-residue chain is Rhodopsin (351 aa).

Residues 1–36 (MNGTEGPYFYVPMVNTTGVVRSPYEYPQYYLVNPAA) lie on the Extracellular side of the membrane. N2 and N15 each carry an N-linked (GlcNAc...) asparagine glycan. The helical transmembrane segment at 37-61 (FAVLGAYMFFLIIFGFPINFLTLYV) threads the bilayer. The Cytoplasmic portion of the chain corresponds to 62-73 (TLEHKKLRTPLN). A helical membrane pass occupies residues 74–96 (YILLNLAVADLFMVIGGFTTTMY). Residues 97 to 110 (SSMHGYFVLGRLGC) lie on the Extracellular side of the membrane. A disulfide bridge connects residues C110 and C187. Residues 111–133 (NLEGFSATLGGMISLWSLAVLAI) traverse the membrane as a helical segment. The 'Ionic lock' involved in activated form stabilization motif lies at 134-136 (ERW). Residues 134 to 152 (ERWVVVCKPTSNFRFGENH) lie on the Cytoplasmic side of the membrane. A helical membrane pass occupies residues 153 to 173 (AIMGVSLTWTMALACTVPPLV). Residues 174–202 (GWSRYIPEGMQCSCGIDYYTRAEGFNNES) lie on the Extracellular side of the membrane. N200 is a glycosylation site (N-linked (GlcNAc...) asparagine). Residues 203 to 224 (FVLYMFFCHFMVPLIIIFFCYG) form a helical membrane-spanning segment. Topologically, residues 225 to 252 (RLLCAVKEAAAAQQESETTQRAEREVTR) are cytoplasmic. A helical membrane pass occupies residues 253 to 274 (MVILMVIGYLVCWLPYASVAWF). Topologically, residues 275-286 (IFTHQGSEFGPL) are extracellular. A helical membrane pass occupies residues 287-308 (FMTIPAFFAKSSSIYNPVIYIC). K296 carries the N6-(retinylidene)lysine modification. Over 309 to 351 (MNKQFRNCMITTLFCGKNPFEGEEEGASSTKTEASSASSVSPA) the chain is Cytoplasmic. The S-palmitoyl cysteine moiety is linked to residue C323. Residues 330–351 (GEEEGASSTKTEASSASSVSPA) are disordered. The segment covering 335–351 (ASSTKTEASSASSVSPA) has biased composition (low complexity).

It belongs to the G-protein coupled receptor 1 family. Opsin subfamily. In terms of processing, phosphorylated on some or all of the serine and threonine residues present in the C-terminal region. Post-translationally, contains one covalently linked retinal chromophore.

It localises to the membrane. Its subcellular location is the cell projection. The protein localises to the cilium. The protein resides in the photoreceptor outer segment. Its function is as follows. Photoreceptor required for image-forming vision at low light intensity. While most salt water fish species use retinal as chromophore, most freshwater fish use 3-dehydroretinal, or a mixture of retinal and 3-dehydroretinal. Light-induced isomerization of 11-cis to all-trans retinal triggers a conformational change that activates signaling via G-proteins. Subsequent receptor phosphorylation mediates displacement of the bound G-protein alpha subunit by arrestin and terminates signaling. The polypeptide is Rhodopsin (rho) (Neoniphon sammara (Spotfin squirrelfish)).